The primary structure comprises 357 residues: DNA integrity scanning protein DisA (357 aa).

One can recognise a DAC domain in the interval 3-141; that stretch reads RPTLRETVAR…GGERHVVADS (139 aa). ATP-binding positions include Gly-70, Leu-88, and 101–105; that span reads TRHRS.

The protein belongs to the DisA family. In terms of assembly, homooctamer. Mg(2+) serves as cofactor.

It catalyses the reaction 2 ATP = 3',3'-c-di-AMP + 2 diphosphate. Its function is as follows. Participates in a DNA-damage check-point. DisA forms globular foci that rapidly scan along the chromosomes searching for lesions. Also has diadenylate cyclase activity, catalyzing the condensation of 2 ATP molecules into cyclic di-AMP (c-di-AMP). c-di-AMP likely acts as a signaling molecule that may couple DNA integrity with a cellular process. In Mycobacterium avium (strain 104), this protein is DNA integrity scanning protein DisA.